The following is a 225-amino-acid chain: Gene 30 protein (225 aa).

Residues 48-73 form a disordered region; it reads RNSELGHPEVKKEETTQQPEKGEGMA. The segment covering 51-73 has biased composition (basic and acidic residues); it reads ELGHPEVKKEETTQQPEKGEGMA.

Its function is as follows. Essential for DNA synthesis. This chain is Gene 30 protein (30), found in Bacillus phage SP01 (Bacteriophage SP01).